The chain runs to 307 residues: Heme A synthase (307 aa).

The Cytoplasmic segment spans residues 1-6 (MKFALR). The helical transmembrane segment at 7-27 (LLSVITTFVMLIVLIGGALVT) threads the bilayer. The Extracellular segment spans residues 28–65 (KTGSGLGCGRQWPLCHGRFFPEMNPASIIEWSHRMSTG). The cysteines at positions 35 and 42 are disulfide-linked. E57 is a catalytic residue. H60 is a binding site for heme o. The helical transmembrane segment at 66–86 (VSTILVLALAVLCWKKISPVF) threads the bilayer. The Cytoplasmic portion of the chain corresponds to 87–92 (RETKFL). The chain crosses the membrane as a helical span at residues 93 to 113 (VIMSIIFLLLQALLGALAVVF). The Extracellular portion of the chain corresponds to 114–121 (GSNALVMA). A helical transmembrane segment spans residues 122 to 142 (LHFGISLISFASVLLLALLVF). H123 is a heme o binding site. Over 143–161 (EATRSETKLVKPLHIGKKM) the chain is Cytoplasmic. Residues 162-182 (QFHIYGLITYTYIVVYTGAYV) traverse the membrane as a helical segment. Residues 183–216 (RHTKSSLACSVFPFCSKDGALPAYFNQWVQMSHR) lie on the Extracellular side of the membrane. C191 and C197 are disulfide-bonded. A heme b-binding site is contributed by H215. The helical transmembrane segment at 217 to 237 (AAALLLFVWIFVAMFHAMKHY) threads the bilayer. Residues 238–242 (KEQKQ) are Cytoplasmic-facing. A helical membrane pass occupies residues 243-263 (LYYGWIISAILITLQAISGVM). Residues 264-274 (SVYSQLALGYA) lie on the Extracellular side of the membrane. Residues 275 to 295 (LAHSFFISCLFGVLCYFCLLI) traverse the membrane as a helical segment. Residue H277 coordinates heme b. The Cytoplasmic segment spans residues 296-307 (ARFKYESKEPFK).

It belongs to the COX15/CtaA family. Type 1 subfamily. In terms of assembly, interacts with CtaB. Heme b serves as cofactor.

Its subcellular location is the cell membrane. The enzyme catalyses Fe(II)-heme o + 2 A + H2O = Fe(II)-heme a + 2 AH2. The protein operates within porphyrin-containing compound metabolism; heme A biosynthesis; heme A from heme O: step 1/1. In terms of biological role, catalyzes the conversion of heme O to heme A by two successive hydroxylations of the methyl group at C8. The first hydroxylation forms heme I, the second hydroxylation results in an unstable dihydroxymethyl group, which spontaneously dehydrates, resulting in the formyl group of heme A. The sequence is that of Heme A synthase from Bacillus pumilus (strain SAFR-032).